The sequence spans 417 residues: Tyrosine--tRNA ligase (417 aa).

Tyr-39 contacts L-tyrosine. The 'HIGH' region motif lies at 44–53 (PTAASLHAGG). L-tyrosine-binding residues include Tyr-176 and Gln-180. A 'KMSKS' region motif is present at residues 236–240 (KMGKS). Lys-239 contributes to the ATP binding site. Residues 350–417 (LGLLTLLVRA…KKKHLLVRPV (68 aa)) enclose the S4 RNA-binding domain.

Belongs to the class-I aminoacyl-tRNA synthetase family. TyrS type 1 subfamily. Homodimer.

It is found in the cytoplasm. It carries out the reaction tRNA(Tyr) + L-tyrosine + ATP = L-tyrosyl-tRNA(Tyr) + AMP + diphosphate + H(+). In terms of biological role, catalyzes the attachment of tyrosine to tRNA(Tyr) in a two-step reaction: tyrosine is first activated by ATP to form Tyr-AMP and then transferred to the acceptor end of tRNA(Tyr). The protein is Tyrosine--tRNA ligase of Rhizobium meliloti (strain 1021) (Ensifer meliloti).